A 287-amino-acid polypeptide reads, in one-letter code: Probable 3-hydroxybutyryl-CoA dehydrogenase (287 aa).

This sequence belongs to the 3-hydroxyacyl-CoA dehydrogenase family.

It catalyses the reaction (3S)-3-hydroxybutanoyl-CoA + NADP(+) = acetoacetyl-CoA + NADPH + H(+). It participates in lipid metabolism; butanoate metabolism. The sequence is that of Probable 3-hydroxybutyryl-CoA dehydrogenase (mmgB) from Bacillus subtilis (strain 168).